The following is a 239-amino-acid chain: Ribonuclease PH (239 aa).

Phosphate is bound by residues arginine 86 and glycine 124–arginine 126.

The protein belongs to the RNase PH family. In terms of assembly, homohexameric ring arranged as a trimer of dimers.

The catalysed reaction is tRNA(n+1) + phosphate = tRNA(n) + a ribonucleoside 5'-diphosphate. Functionally, phosphorolytic 3'-5' exoribonuclease that plays an important role in tRNA 3'-end maturation. Removes nucleotide residues following the 3'-CCA terminus of tRNAs; can also add nucleotides to the ends of RNA molecules by using nucleoside diphosphates as substrates, but this may not be physiologically important. Probably plays a role in initiation of 16S rRNA degradation (leading to ribosome degradation) during starvation. The chain is Ribonuclease PH from Rickettsia felis (strain ATCC VR-1525 / URRWXCal2) (Rickettsia azadi).